Reading from the N-terminus, the 524-residue chain is Methyl-CpG-binding domain-containing protein 8 (524 aa).

The span at 45–60 (CSSLSPSSSASLAASA) shows a compositional bias: low complexity. Positions 45–151 (CSSLSPSSSA…EEELEDNEGQ (107 aa)) are disordered. The span at 75–84 (FNESAGSRKQ) shows a compositional bias: polar residues. A compositionally biased stretch (basic and acidic residues) spans 106-116 (RQRDDSSREEQ). Positions 136 to 149 (EEEDEGEEELEDNE) are enriched in acidic residues. The MBD domain maps to 334-406 (VVNACDYGGY…QHYYLQSDNK (73 aa)).

As to expression, expressed in shoot meristems, roots (vasculature and tips), hypocotyls (vasculature), cotyledons (vasculature and hydathodes), young leaves, buds, flowers and stems. Detected in stomata.

Its subcellular location is the nucleus. Probable transcriptional regulator. May regulates developmental traits such as flowering time. The sequence is that of Methyl-CpG-binding domain-containing protein 8 (MBD8) from Arabidopsis thaliana (Mouse-ear cress).